The following is a 183-amino-acid chain: MTKQPEDWLDDVPGDDIEDEDDEIIWVSKSEIKRDAEELKRLGAELVDLGKNALDKIPLDADLRDAIELAQRIKMEGRRRQLQLIGKMLRQRDVEPIRQALDKLKNRHNQQVVLFHKLEHLRDRLIVEGDDAVAEVLTLWPHADRQQLRSLIRNAKKEKEGNKPPKSARQIFQYLRELAENEG.

Belongs to the DarP family.

The protein resides in the cytoplasm. In terms of biological role, member of a network of 50S ribosomal subunit biogenesis factors which assembles along the 30S-50S interface, preventing incorrect 23S rRNA structures from forming. Promotes peptidyl transferase center (PTC) maturation. The sequence is that of Dual-action ribosomal maturation protein DarP from Salmonella enteritidis PT4 (strain P125109).